The chain runs to 545 residues: Resolvase homolog YokA (545 aa).

Positions 14-165 constitute a Resolvase/invertase-type recombinase catalytic domain; sequence NILGYLRRSR…GAKYTYAAQG (152 aa). Positions 19 to 46 form a coiled coil; sequence LRRSRQDMEREKRTGEDTLTEQKELMNK. Ser22 (O-(5'-phospho-DNA)-serine intermediate) is an active-site residue. The segment at residues 173–303 is a DNA-binding region (recombinase); that stretch reads PYGYQLNKKT…VKIANKVPLL (131 aa). Residues 402 to 475 are a coiled coil; it reads NMKTKKQMSE…QDTQSEIDSN (74 aa).

The protein in the N-terminal section; belongs to the site-specific recombinase resolvase family.

This chain is Resolvase homolog YokA (yokA), found in Bacillus subtilis (strain 168).